The sequence spans 176 residues: Large ribosomal subunit protein uL6 (176 aa).

It belongs to the universal ribosomal protein uL6 family. In terms of assembly, part of the 50S ribosomal subunit.

Functionally, this protein binds to the 23S rRNA, and is important in its secondary structure. It is located near the subunit interface in the base of the L7/L12 stalk, and near the tRNA binding site of the peptidyltransferase center. In Lactobacillus delbrueckii subsp. bulgaricus (strain ATCC 11842 / DSM 20081 / BCRC 10696 / JCM 1002 / NBRC 13953 / NCIMB 11778 / NCTC 12712 / WDCM 00102 / Lb 14), this protein is Large ribosomal subunit protein uL6.